The chain runs to 310 residues: Acetylglutamate kinase (310 aa).

Substrate is bound by residues glycine 83 to glycine 84, arginine 105, and asparagine 207.

This sequence belongs to the acetylglutamate kinase family. ArgB subfamily.

It is found in the cytoplasm. The enzyme catalyses N-acetyl-L-glutamate + ATP = N-acetyl-L-glutamyl 5-phosphate + ADP. The protein operates within amino-acid biosynthesis; L-arginine biosynthesis; N(2)-acetyl-L-ornithine from L-glutamate: step 2/4. Its function is as follows. Catalyzes the ATP-dependent phosphorylation of N-acetyl-L-glutamate. This is Acetylglutamate kinase from Ralstonia nicotianae (strain ATCC BAA-1114 / GMI1000) (Ralstonia solanacearum).